A 394-amino-acid chain; its full sequence is MAADGTGVVGGGAVGGPLSKDGLLDAKCPEPIPNRRRSSSLSRDAQRRAYQWCREYLGGAWRRARPEELSVCPVSGGLSNLLFRCSLPNHVPSMGGEPREVLLRLYGAILQGVDSLVLESVMFAILAERSLGPQLYGVFPEGRLEQYLPSRPLKTQELRDPVLSGAIATKMARFHGMEMPFTKEPRWLFGTMERYLKQIQDLPSTSLPQMNLVEMYSLKDEMNHLRTLLDATPSPVVFCHNDIQEGNILLLSEPDSDDNLMLVDFEYSSYNYRGFDIGNHFCEWVYDYTYEEWPFYKARPADYPTREQQLLFIRHYLAEVQKGEVLSEEEQKKQEEDLLIEISRYALASHFFWGLWSTLQASMSTIEFGYLEYAQSRFQFYFQQKGQLTSFLSP.

Alanine 2 bears the N-acetylalanine mark. A disordered region spans residues 22–42 (GLLDAKCPEPIPNRRRSSSLS). ATP is bound by residues 75 to 81 (SGGLSNL), arginine 104, 146 to 152 (QYLPSRP), glutamine 244, and aspartate 264. 77–79 (GLS) is a binding site for substrate.

This sequence belongs to the choline/ethanolamine kinase family. In terms of assembly, homodimer, and heterodimer with CHKA.

The catalysed reaction is choline + ATP = phosphocholine + ADP + H(+). It catalyses the reaction ethanolamine + ATP = phosphoethanolamine + ADP + H(+). It participates in phospholipid metabolism; phosphatidylethanolamine biosynthesis; phosphatidylethanolamine from ethanolamine: step 1/3. In terms of biological role, has a key role in phospholipid metabolism, and catalyzes the first step of phosphatidylethanolamine and phosphatidylcholine biosynthesis. This Rattus norvegicus (Rat) protein is Choline/ethanolamine kinase (Chkb).